A 342-amino-acid polypeptide reads, in one-letter code: HPr kinase/phosphorylase (342 aa).

Residues H153 and K174 contribute to the active site. 168 to 175 contributes to the ATP binding site; that stretch reads GKSGLGKS. S175 provides a ligand contact to Mg(2+). The Proton acceptor; for phosphorylation activity. Proton donor; for dephosphorylation activity role is filled by D192. Residues 217-226 are important for the catalytic mechanism of both phosphorylation and dephosphorylation; it reads MEIRGLGVVD. E218 serves as a coordination point for Mg(2+). R259 is a catalytic residue. Residues 280 to 285 are important for the catalytic mechanism of dephosphorylation; that stretch reads PIFPGK.

It belongs to the HPrK/P family. As to quaternary structure, homohexamer. Mg(2+) serves as cofactor.

It catalyses the reaction [HPr protein]-L-serine + ATP = [HPr protein]-O-phospho-L-serine + ADP + H(+). The catalysed reaction is [HPr protein]-O-phospho-L-serine + phosphate + H(+) = [HPr protein]-L-serine + diphosphate. In terms of biological role, catalyzes the ATP- as well as the pyrophosphate-dependent phosphorylation of a specific serine residue in HPr, a phosphocarrier protein of the phosphoenolpyruvate-dependent sugar phosphotransferase system (PTS). HprK/P also catalyzes the pyrophosphate-producing, inorganic phosphate-dependent dephosphorylation (phosphorolysis) of seryl-phosphorylated HPr (P-Ser-HPr). The chain is HPr kinase/phosphorylase from Chlorobaculum tepidum (strain ATCC 49652 / DSM 12025 / NBRC 103806 / TLS) (Chlorobium tepidum).